The following is a 79-amino-acid chain: Dolichol phosphate-mannose biosynthesis regulatory protein (79 aa).

2 helical membrane-spanning segments follow: residues 8–28 (IGFV…TWVI) and 50–70 (IIIP…FLGL).

This sequence belongs to the DPM2 family. As to quaternary structure, component of the dolichol-phosphate mannose (DPM) synthase complex composed of dpm1, dpm2 and dpm3.

The protein resides in the endoplasmic reticulum membrane. It participates in protein modification; protein glycosylation. Functionally, regulates the biosynthesis of dolichol phosphate-mannose. Regulatory subunit of the dolichol-phosphate mannose (DPM) synthase complex; essential for the ER localization and stable expression of dpm1. This is Dolichol phosphate-mannose biosynthesis regulatory protein (dpm2-1) from Dictyostelium discoideum (Social amoeba).